The chain runs to 724 residues: Catalase-peroxidase (724 aa).

The disordered stretch occupies residues 1 to 26 (MDENKTKPTGKCPVMHGGNTSTGSSN). Residues 98–225 (WHSAGSYRTT…LAAVQMGLIY (128 aa)) constitute a cross-link (tryptophyl-tyrosyl-methioninium (Trp-Tyr) (with M-251)). His-99 functions as the Proton acceptor in the catalytic mechanism. A cross-link (tryptophyl-tyrosyl-methioninium (Tyr-Met) (with W-98)) is located at residues 225–251 (YVNPEGVDGKSDPLRTAQDMRVTFSRM). His-266 contributes to the heme b binding site.

The protein belongs to the peroxidase family. Peroxidase/catalase subfamily. In terms of assembly, homodimer or homotetramer. Heme b is required as a cofactor. In terms of processing, formation of the three residue Trp-Tyr-Met cross-link is important for the catalase, but not the peroxidase activity of the enzyme.

It catalyses the reaction H2O2 + AH2 = A + 2 H2O. The enzyme catalyses 2 H2O2 = O2 + 2 H2O. In terms of biological role, bifunctional enzyme with both catalase and broad-spectrum peroxidase activity. In Pectobacterium atrosepticum (strain SCRI 1043 / ATCC BAA-672) (Erwinia carotovora subsp. atroseptica), this protein is Catalase-peroxidase.